The chain runs to 246 residues: 1-(5-phosphoribosyl)-5-[(5-phosphoribosylamino)methylideneamino] imidazole-4-carboxamide isomerase (246 aa).

The active-site Proton acceptor is the aspartate 7. Aspartate 130 acts as the Proton donor in catalysis.

Belongs to the HisA/HisF family.

It is found in the cytoplasm. The enzyme catalyses 1-(5-phospho-beta-D-ribosyl)-5-[(5-phospho-beta-D-ribosylamino)methylideneamino]imidazole-4-carboxamide = 5-[(5-phospho-1-deoxy-D-ribulos-1-ylimino)methylamino]-1-(5-phospho-beta-D-ribosyl)imidazole-4-carboxamide. It participates in amino-acid biosynthesis; L-histidine biosynthesis; L-histidine from 5-phospho-alpha-D-ribose 1-diphosphate: step 4/9. This chain is 1-(5-phosphoribosyl)-5-[(5-phosphoribosylamino)methylideneamino] imidazole-4-carboxamide isomerase, found in Sodalis glossinidius (strain morsitans).